A 1882-amino-acid polypeptide reads, in one-letter code: uncharacterized protein (1882 aa).

A helical membrane pass occupies residues 16 to 36 (FFLLFGIIFVLFSIIFLETSI). 4 disordered regions span residues 103–129 (DFGS…DVND), 220–306 (FPGD…ESET), 492–513 (VALA…VKDP), and 658–698 (QTDE…TKST). The span at 221-239 (PGDKGKGEDKKTTKKKSEI) shows a compositional bias: basic and acidic residues. A compositionally biased stretch (polar residues) spans 240–249 (KQASSATTVL). 3 stretches are compositionally biased toward basic and acidic residues: residues 259–275 (TDAK…KDSN), 284–294 (NKDKVWFKSDE), and 500–511 (DKQESSADDGVK). A compositionally biased stretch (low complexity) spans 667 to 698 (AKTTQGTTDSLTQLADASSSSSSSSTGDTKST). The next 4 helical transmembrane spans lie at 987 to 1007 (ASVV…ILLI), 1037 to 1057 (VFAG…AFLL), 1080 to 1100 (WISF…ISWI), and 1154 to 1174 (LFTY…AGTI). 2 disordered regions span residues 1233–1253 (DQIQ…EHPY) and 1572–1598 (KDGQ…TSST). Residues 1234–1245 (QIQQQQQQQQQQ) show a composition bias toward low complexity. Over residues 1583-1594 (TSSGGGSCGGGS) the composition is skewed to gly residues. A run of 4 helical transmembrane segments spans residues 1759 to 1779 (FLLG…GISM), 1807 to 1827 (FFIP…AGLL), 1828 to 1848 (VGVQ…VFEF), and 1851 to 1871 (YMVG…YFWI).

The protein belongs to the ABC-4 integral membrane protein family.

It is found in the cell membrane. This is an uncharacterized protein from Mycoplasma pneumoniae (strain ATCC 29342 / M129 / Subtype 1) (Mycoplasmoides pneumoniae).